Reading from the N-terminus, the 726-residue chain is Beta-glucosidase cel3A (726 aa).

Positions 1-20 are cleaved as a signal peptide; sequence MASRLVAGLQVLALAGTATA. Asn223 and Asn592 each carry an N-linked (GlcNAc...) asparagine glycan.

The protein belongs to the glycosyl hydrolase 3 family.

It is found in the secreted. The catalysed reaction is Hydrolysis of terminal, non-reducing beta-D-glucosyl residues with release of beta-D-glucose.. The protein operates within glycan metabolism; cellulose degradation. Functionally, beta-glucosidases are one of a number of cellulolytic enzymes involved in the degradation of cellulosic biomass. Catalyzes the last step releasing glucose from the inhibitory cellobiose. Has a broad substrate specificity but preferentially hydrolyzes highly polymerized 1,3- and 1,4-beta-glucans. The sequence is that of Beta-glucosidase cel3A from Pyricularia oryzae (strain 70-15 / ATCC MYA-4617 / FGSC 8958) (Rice blast fungus).